A 61-amino-acid polypeptide reads, in one-letter code: Defensin BmKDfsin1 (61 aa).

The first 25 residues, 1 to 25, serve as a signal peptide directing secretion; that stretch reads MKTIVLLFVLVLVFALLVKMGMVEA. Cystine bridges form between C29-C50, C36-C58, and C40-C60.

Belongs to the invertebrate defensin family. Type 2 subfamily. Highly expressed in non-venom gland (hemolymph) and moderately expressed in venom gland.

It localises to the secreted. Functionally, antibacterial peptide active against Gram-positive bacteria, but not on Gram-negative bacteria. Also has weak blocking activity on Kv1.1/KCNA1, Kv1.2/KCNA2, Kv1.3/KCNA3, KCa3.1/KCNN4/IK, KCa2.3/KCNN3/SK3 and Kv11.1/KCNH2/ERG1 channels (tested at 1 uM). It inhibits potassium channel current by interacting with the pore region. The sequence is that of Defensin BmKDfsin1 from Olivierus martensii (Manchurian scorpion).